The primary structure comprises 85 residues: Beta-mammal/insect toxin Lqhb1 (85 aa).

The first 19 residues, 1–19 (MKIIIFLIVSSLMLIGVKT), serve as a signal peptide directing secretion. The LCN-type CS-alpha/beta domain maps to 20 to 82 (DNGYLLNKAT…LWAYATNKCN (63 aa)). Intrachain disulfides connect C31–C81, C35–C56, C42–C63, and C46–C65.

The protein belongs to the long (4 C-C) scorpion toxin superfamily. Sodium channel inhibitor family. In terms of tissue distribution, expressed by the venom gland.

It localises to the secreted. Its function is as follows. Beta toxins bind voltage-independently at site-4 of sodium channels (Nav) and shift the voltage of activation toward more negative potentials thereby affecting sodium channel activation and promoting spontaneous and repetitive firing. Competes, with apparent high affinity, with anti-insect and anti-mammalian beta-toxins for binding to cockroach and rat brain synaptosomes, respectively. Also competes with an anti-mammalian alpha-toxin on binding to rat brain sodium channels. Has a weak effect on cardiac sodium channels and a marked effect on rat brain and skeletal muscle sodium channels. The protein is Beta-mammal/insect toxin Lqhb1 of Leiurus hebraeus (Hebrew deathstalker scorpion).